A 370-amino-acid chain; its full sequence is Anhydro-N-acetylmuramic acid kinase (370 aa).

12–19 provides a ligand contact to ATP; it reads GTSLDGVD.

It belongs to the anhydro-N-acetylmuramic acid kinase family.

The enzyme catalyses 1,6-anhydro-N-acetyl-beta-muramate + ATP + H2O = N-acetyl-D-muramate 6-phosphate + ADP + H(+). It functions in the pathway amino-sugar metabolism; 1,6-anhydro-N-acetylmuramate degradation. The protein operates within cell wall biogenesis; peptidoglycan recycling. Its function is as follows. Catalyzes the specific phosphorylation of 1,6-anhydro-N-acetylmuramic acid (anhMurNAc) with the simultaneous cleavage of the 1,6-anhydro ring, generating MurNAc-6-P. Is required for the utilization of anhMurNAc either imported from the medium or derived from its own cell wall murein, and thus plays a role in cell wall recycling. This Proteus mirabilis (strain HI4320) protein is Anhydro-N-acetylmuramic acid kinase.